The sequence spans 335 residues: Phosphate acyltransferase (335 aa).

Belongs to the PlsX family. As to quaternary structure, homodimer. Probably interacts with PlsY.

Its subcellular location is the cytoplasm. The catalysed reaction is a fatty acyl-[ACP] + phosphate = an acyl phosphate + holo-[ACP]. It participates in lipid metabolism; phospholipid metabolism. Functionally, catalyzes the reversible formation of acyl-phosphate (acyl-PO(4)) from acyl-[acyl-carrier-protein] (acyl-ACP). This enzyme utilizes acyl-ACP as fatty acyl donor, but not acyl-CoA. This is Phosphate acyltransferase from Clostridium botulinum (strain ATCC 19397 / Type A).